A 578-amino-acid polypeptide reads, in one-letter code: uncharacterized protein (578 aa).

This is an uncharacterized protein from Ostreid herpesvirus 1 (isolate France) (OsHV-1).